A 171-amino-acid polypeptide reads, in one-letter code: Ribosome maturation factor RimM (171 aa).

In terms of domain architecture, PRC barrel spans 97–169; sequence DGEFYYHEII…RVDVDIMEGL (73 aa).

It belongs to the RimM family. Binds ribosomal protein uS19.

Its subcellular location is the cytoplasm. In terms of biological role, an accessory protein needed during the final step in the assembly of 30S ribosomal subunit, possibly for assembly of the head region. Essential for efficient processing of 16S rRNA. May be needed both before and after RbfA during the maturation of 16S rRNA. It has affinity for free ribosomal 30S subunits but not for 70S ribosomes. In Lactococcus lactis subsp. cremoris (strain MG1363), this protein is Ribosome maturation factor RimM.